Here is a 508-residue protein sequence, read N- to C-terminus: Small ribosomal subunit protein mS47 (508 aa).

The protein belongs to the enoyl-CoA hydratase/isomerase family. Mitochondrion-specific ribosomal protein mS47 subfamily. As to quaternary structure, component of the mitochondrial small ribosomal subunit (mt-SSU). Mature N.crassa 74S mitochondrial ribosomes consist of a small (37S) and a large (54S) subunit. The 37S small subunit contains a 16S ribosomal RNA (16S mt-rRNA) and 32 different proteins. The 54S large subunit contains a 23S rRNA (23S mt-rRNA) and 42 different proteins. mS47 forms a protuberance of the N.crassa mitoribosome and retains a solvent-exposed cavity liekly capable of accommodating a substrate, in accordance with it being an active enzyme as well as an integral constituent of the mitoribosome.

The protein resides in the mitochondrion. It catalyses the reaction 3-hydroxy-2-methylpropanoyl-CoA + H2O = 3-hydroxy-2-methylpropanoate + CoA + H(+). Its function is as follows. Component of the mitochondrial ribosome (mitoribosome), a dedicated translation machinery responsible for the synthesis of mitochondrial genome-encoded proteins, including at least some of the essential transmembrane subunits of the mitochondrial respiratory chain. The mitoribosomes are attached to the mitochondrial inner membrane and translation products are cotranslationally integrated into the membrane. mS47 has enzymatic activity in vitro, and is able to catalyze the specific hydrolysis of 3-hydroxyisobutyryl-CoA (HIBYL-CoA). However, because the turnover rate of mS47 is only a fraction of that of the homologous mammalian enzyme, the physiological function of this activity remains unclear. The protein is Small ribosomal subunit protein mS47 (ehd3) of Neurospora crassa (strain ATCC 24698 / 74-OR23-1A / CBS 708.71 / DSM 1257 / FGSC 987).